Here is a 427-residue protein sequence, read N- to C-terminus: Glutamate-1-semialdehyde 2,1-aminomutase (427 aa).

Residue K267 is modified to N6-(pyridoxal phosphate)lysine.

This sequence belongs to the class-III pyridoxal-phosphate-dependent aminotransferase family. HemL subfamily. Homodimer. Pyridoxal 5'-phosphate serves as cofactor.

The protein localises to the cytoplasm. It catalyses the reaction (S)-4-amino-5-oxopentanoate = 5-aminolevulinate. Its pathway is porphyrin-containing compound metabolism; protoporphyrin-IX biosynthesis; 5-aminolevulinate from L-glutamyl-tRNA(Glu): step 2/2. This Geotalea daltonii (strain DSM 22248 / JCM 15807 / FRC-32) (Geobacter daltonii) protein is Glutamate-1-semialdehyde 2,1-aminomutase.